The primary structure comprises 124 residues: Small ribosomal subunit protein uS12 (124 aa).

Residues 1–32 (MPTIQQLVRKGRQAKTTKTKTPALKGSPQRRG) form a disordered region. Over residues 9 to 18 (RKGRQAKTTK) the composition is skewed to basic residues. At D89 the chain carries 3-methylthioaspartic acid. The segment at 105–124 (QGVRNRKQARSRYGAKKEKS) is disordered. The segment covering 108 to 118 (RNRKQARSRYG) has biased composition (basic residues).

The protein belongs to the universal ribosomal protein uS12 family. As to quaternary structure, part of the 30S ribosomal subunit. Contacts proteins S8 and S17. May interact with IF1 in the 30S initiation complex.

Functionally, with S4 and S5 plays an important role in translational accuracy. Its function is as follows. Interacts with and stabilizes bases of the 16S rRNA that are involved in tRNA selection in the A site and with the mRNA backbone. Located at the interface of the 30S and 50S subunits, it traverses the body of the 30S subunit contacting proteins on the other side and probably holding the rRNA structure together. The combined cluster of proteins S8, S12 and S17 appears to hold together the shoulder and platform of the 30S subunit. This chain is Small ribosomal subunit protein uS12, found in Salinispora arenicola (strain CNS-205).